The sequence spans 301 residues: Runt-related transcription factor rnt-1 (301 aa).

The region spanning N10–I138 is the Runt domain. 3 interaction with DNA regions span residues R40 to S44, R95 to G103, and V128 to R137. Residues R99 and V130 each contribute to the chloride site. The interval P237–F301 is disordered. Residue S255 is modified to Phosphoserine. Polar residues predominate over residues S255–S276. Positions V285–F301 are enriched in low complexity.

Interacts with CBFbeta homolog bro-1; acts to increase the affinity and specificity of interaction of rnt-1 with DNA. Interacts with TGF-beta pathway protein sma-4. In terms of processing, may be ubiquitinated in order to be targeted for proteasome-mediated degradation in intestinal cells. Post-translationally, may be phosphorylated by members of the p38 MAP kinase pathway. In terms of tissue distribution, expressed in the intestine.

It is found in the nucleus. Functionally, transcription factor. Binds to regulatory DNA sequences in order to modulate transcription; negatively autoregulates its own expression, perhaps dependent upon CBF beta homolog bro-1. Promotes proliferation, and prevents differentiation, of seam cells, a stem cell-like lineage, acting in concert with bro-1. Required for controlling cell proliferation in the seam cells, perhaps by repressing expression of cyclin-dependent kinase inhibitor cki-1. Inhibition of seam cell differentiation is regulated by rnt-1 and bro-1, perhaps acting upstream of pop-1, by antagonizing pop-1 repressor function. Required for asymmetrical cell divisions in the lineage derived from a posterior embryonic seam cell, the T blast cell, and for asymmetric expression of zinc finger protein tlp-1. Regulates growth and male tail development. Involved in the oxidative stress response, perhaps downstream of the p38 MAP kinase pathway, and acting as part of a negative feedback loop via a transcriptional target gene, tyrosine-protein phosphatase vhp-1. Positively modulates dopaminergic signaling in a non-cell autonomous manner. May be involved in TGF-beta signaling. This is Runt-related transcription factor rnt-1 from Caenorhabditis elegans.